The following is a 668-amino-acid chain: Threonine--tRNA ligase (668 aa).

The region spanning 1 to 64 (MSQAISLTFP…TDGKIEIITR (64 aa)) is the TGS domain. Positions 245-553 (DHRKLGREMD…LIENFAGHMP (309 aa)) are catalytic. The Zn(2+) site is built by cysteine 347, histidine 398, and histidine 530.

Belongs to the class-II aminoacyl-tRNA synthetase family. In terms of assembly, homodimer. Zn(2+) is required as a cofactor.

Its subcellular location is the cytoplasm. The catalysed reaction is tRNA(Thr) + L-threonine + ATP = L-threonyl-tRNA(Thr) + AMP + diphosphate + H(+). In terms of biological role, catalyzes the attachment of threonine to tRNA(Thr) in a two-step reaction: L-threonine is first activated by ATP to form Thr-AMP and then transferred to the acceptor end of tRNA(Thr). Also edits incorrectly charged L-seryl-tRNA(Thr). This chain is Threonine--tRNA ligase, found in Rhizobium etli (strain CIAT 652).